Consider the following 138-residue polypeptide: Beta-lactamase HcpB (138 aa).

3 TPR repeats span residues 1–28 (MVGG…NEMF), 57–94 (GNGC…NDQD), and 97–130 (LILG…GSED). Cystine bridges form between C22/C30, C52/C60, C88/C96, and C124/C132.

Belongs to the hcp beta-lactamase family.

It carries out the reaction a beta-lactam + H2O = a substituted beta-amino acid. Functionally, hydrolyzes 6-aminopenicillinic acid and 7-aminocephalosporanic acid (ACA) derivatives. The polypeptide is Beta-lactamase HcpB (hcpB) (Helicobacter pylori (strain ATCC 700392 / 26695) (Campylobacter pylori)).